The following is a 677-amino-acid chain: Zinc finger protein 526 (677 aa).

C2H2-type zinc fingers lie at residues 57–79, 109–131, and 141–164; these read FMCS…QEQH, FQCG…QDAH, and YQCG…KAQH. The interval 167–190 is disordered; it reads TAAAKPPVPPPLPPVTPPPPPPAP. Pro residues predominate over residues 172–190; sequence PPVPPPLPPVTPPPPPPAP. The C2H2-type 4 zinc-finger motif lies at 198–220; it reads YECPECSTLCTTPEEFLEHQGTH. The span at 223-232 shows a compositional bias: basic and acidic residues; it reads SLEKEEHNGL. Residues 223 to 300 form a disordered region; the sequence is SLEKEEHNGL…RRASHGPASA (78 aa). Residues 233–257 show a composition bias toward acidic residues; the sequence is EEEEEDDEDDNEETEEEEEAAAEVG. 4 C2H2-type zinc fingers span residues 304–326, 331–353, 359–381, and 387–408; these read FYCS…GRAH, HECT…LRLH, YLCV…RRAH, and HRCR…RRTH. Positions 408-449 are disordered; that stretch reads HAGKSGAPPSAAPPTVASAVASLAPAEPTPPPPAPPTPPAQL. The span at 410-433 shows a compositional bias: low complexity; it reads GKSGAPPSAAPPTVASAVASLAPA. Pro residues predominate over residues 434 to 449; it reads EPTPPPPAPPTPPAQL. 5 consecutive C2H2-type zinc fingers follow at residues 449–472, 479–501, 507–529, 535–557, and 580–602; these read LPCP…RAVH, HRCG…LRTH, FQCH…QLTH, YQCL…RRLH, and YYCG…QRVH. The segment at 608 to 627 is disordered; the sequence is LTLQPPRSPPPAPPPPPEPQ. Pro residues predominate over residues 613–626; it reads PRSPPPAPPPPPEP.

Belongs to the krueppel C2H2-type zinc-finger protein family.

It is found in the nucleus. In terms of biological role, may be involved in transcriptional regulation. This Bos taurus (Bovine) protein is Zinc finger protein 526 (ZNF526).